The primary structure comprises 124 residues: S-adenosylmethionine decarboxylase proenzyme (124 aa).

Serine 63 functions as the Schiff-base intermediate with substrate; via pyruvic acid in the catalytic mechanism. Serine 63 bears the Pyruvic acid (Ser); by autocatalysis mark. The Proton acceptor; for processing activity role is filled by histidine 68. Residue cysteine 83 is the Proton donor; for catalytic activity of the active site.

Belongs to the prokaryotic AdoMetDC family. Type 1 subfamily. As to quaternary structure, heterotetramer of two alpha and two beta chains arranged as a dimer of alpha/beta heterodimers. The cofactor is pyruvate. Post-translationally, is synthesized initially as an inactive proenzyme. Formation of the active enzyme involves a self-maturation process in which the active site pyruvoyl group is generated from an internal serine residue via an autocatalytic post-translational modification. Two non-identical subunits are generated from the proenzyme in this reaction, and the pyruvate is formed at the N-terminus of the alpha chain, which is derived from the carboxyl end of the proenzyme. The post-translation cleavage follows an unusual pathway, termed non-hydrolytic serinolysis, in which the side chain hydroxyl group of the serine supplies its oxygen atom to form the C-terminus of the beta chain, while the remainder of the serine residue undergoes an oxidative deamination to produce ammonia and the pyruvoyl group blocking the N-terminus of the alpha chain.

The catalysed reaction is S-adenosyl-L-methionine + H(+) = S-adenosyl 3-(methylsulfanyl)propylamine + CO2. Its pathway is amine and polyamine biosynthesis; S-adenosylmethioninamine biosynthesis; S-adenosylmethioninamine from S-adenosyl-L-methionine: step 1/1. In terms of biological role, catalyzes the decarboxylation of S-adenosylmethionine to S-adenosylmethioninamine (dcAdoMet), the propylamine donor required for the synthesis of the polyamines spermine and spermidine from the diamine putrescine. The protein is S-adenosylmethionine decarboxylase proenzyme of Geobacillus sp. (strain WCH70).